Here is a 1072-residue protein sequence, read N- to C-terminus: MLGDGKEGTSTIPGFNQIQFEGFYRFIDQGLIEELSKFPKIEDIDHEIEFQLFVETYQLVEPLIKERDAVYESLTYSSELYVSAGLIWKTSRNMQEQRIFIGNIPLMNSLGTSIVNGIYRIVINQILQSPGIYYQSELDHNGISVYTGTIISDWGGRLELEIDKKARIWARVSRKQKISILVLSSAMGSNLREILENVCYPEIFLSFLTDKEKKKIGSKENAILEFYQQFSCVGGDPIFSESLCKELQKKFFHQRCELGRIGRRNINWRLNLNIPQNNIFLLPRDILAAADHLIGMKFGMGTLDDMNHLKNKRIRSVADLLQDQLGLALARLENVVKGTISGAIRHKLIPTPQNLVTSTPLTTTYESFFGLHPLSQVLDRTNPLTQIVHGRKLSYLGPGGLTGRTANFRIRDIHPSHYGRICPIDTSEGINVGLIGSLSIHARIGDWGSLESPFYELFEKSKKARIRMLFLSPSQDEYYMIAAGNSLALNRGIQEEQAVPARYRQEFLTIAWEEVHLRSIFPFQYFSIGASLIPFIEHNDANRALMSSNMQRQAVPLSRSEKCIVGTGLERQVALDSGVPAIAEHEGKILYTDTEKIIFSGNGDTLSIPLIMYQRSNKNTCMHQKPQVRRGKCIKKGQILADGAATVGGELALGKNILVAYMPWEGYNFEDAVLISECLVYGDIYTSFHIRKYEIQTHVTTQGPERITKEIPHLEGRLLRNLDKNGIVMLGSWVETGDILVGKLTPQVAKESSYAPEDRLLRAILGIQVSTSKETCLKLPIGGRGRVIDVRWVQKKGGSSYNPEIIRVYISQKREIKVGDKVAGRHGNKGIISKILPRQDMPYLQDGRPVDMVFNPLGVPSRMNVGQIFECSLGLAGSLLDRHYRIAPFDERYEQEASRKLVFSELYEASKQTANPWVFEPEYPGKSRIFDGRTGDPFEQPVIIGKPYILKLIHQVDDKIHGRSSGHYALVTQQPLRGRSKQGGQRVGEMEVWALEGFGVAHILQEMLTYKSDHIRARQEVLGTTIVGGTIPKPDDAPESFRLLVRELRSLALELNHFLVSEKNFQINRKEV.

It belongs to the RNA polymerase beta chain family. In terms of assembly, in plastids the minimal PEP RNA polymerase catalytic core is composed of four subunits: alpha, beta, beta', and beta''. When a (nuclear-encoded) sigma factor is associated with the core the holoenzyme is formed, which can initiate transcription.

The protein localises to the plastid. It localises to the chloroplast. The enzyme catalyses RNA(n) + a ribonucleoside 5'-triphosphate = RNA(n+1) + diphosphate. Functionally, DNA-dependent RNA polymerase catalyzes the transcription of DNA into RNA using the four ribonucleoside triphosphates as substrates. The protein is DNA-directed RNA polymerase subunit beta of Lepidium virginicum (Virginia pepperweed).